A 452-amino-acid chain; its full sequence is GTPase Der (452 aa).

2 EngA-type G domains span residues 4-169 and 177-352; these read PVVA…PPQD and IQMA…EQHR. GTP-binding positions include 10–17, 57–61, 120–123, 183–190, 230–234, and 295–298; these read GRPNVGKS, DTGGL, NKCE, DTAGI, and NKWD. One can recognise a KH-like domain in the interval 353–438; that stretch reads RRVTTAVVNE…PVRLFWRGKQ (86 aa).

It belongs to the TRAFAC class TrmE-Era-EngA-EngB-Septin-like GTPase superfamily. EngA (Der) GTPase family. As to quaternary structure, associates with the 50S ribosomal subunit.

GTPase that plays an essential role in the late steps of ribosome biogenesis. In Synechococcus sp. (strain RCC307), this protein is GTPase Der.